The sequence spans 469 residues: Uronate isomerase (469 aa).

The protein belongs to the metallo-dependent hydrolases superfamily. Uronate isomerase family.

The catalysed reaction is D-glucuronate = D-fructuronate. It catalyses the reaction aldehydo-D-galacturonate = keto-D-tagaturonate. It functions in the pathway carbohydrate metabolism; pentose and glucuronate interconversion. This Yersinia pseudotuberculosis serotype O:1b (strain IP 31758) protein is Uronate isomerase.